The following is a 261-amino-acid chain: Tryptophan synthase alpha chain (261 aa).

Active-site proton acceptor residues include glutamate 47 and aspartate 58.

It belongs to the TrpA family. In terms of assembly, tetramer of two alpha and two beta chains.

The enzyme catalyses (1S,2R)-1-C-(indol-3-yl)glycerol 3-phosphate + L-serine = D-glyceraldehyde 3-phosphate + L-tryptophan + H2O. It participates in amino-acid biosynthesis; L-tryptophan biosynthesis; L-tryptophan from chorismate: step 5/5. Its function is as follows. The alpha subunit is responsible for the aldol cleavage of indoleglycerol phosphate to indole and glyceraldehyde 3-phosphate. This chain is Tryptophan synthase alpha chain, found in Neisseria gonorrhoeae (strain ATCC 700825 / FA 1090).